The primary structure comprises 192 residues: UPF0312 protein PputGB1_5030 (192 aa).

An N-terminal signal peptide occupies residues 1-23 (MLKKTFAALALGTALLSAGQAMA).

It belongs to the UPF0312 family. Type 1 subfamily.

The protein localises to the periplasm. The chain is UPF0312 protein PputGB1_5030 from Pseudomonas putida (strain GB-1).